Consider the following 500-residue polypeptide: Protein adenylyltransferase Fic (500 aa).

The chain crosses the membrane as a helical span at residues 39-59 (LSFLIFFVIGSLFSGLMFALL). TPR repeat units lie at residues 122–155 (ALSS…SPRH) and 156–190 (PEIL…NPSH). Positions 247 to 252 (SVGIEG) match the Inhibitory (S/T)XXXE(G/N) motif motif. ATP contacts are provided by residues glutamate 251 and 333 to 336 (VGGH). The Fido domain occupies 302-437 (ITLKDLLEIH…IRPFVRFIAD (136 aa)). The active site involves histidine 380. ATP-binding positions include 384–391 (DGNGRTSR), 416–417 (YY), and asparagine 424. Residues 477–500 (GREGGSTVHEGSGTGDSIRIGTMW) form a disordered region.

The protein belongs to the fic family. As to quaternary structure, homodimer.

Its subcellular location is the membrane. The enzyme catalyses L-tyrosyl-[protein] + ATP = O-(5'-adenylyl)-L-tyrosyl-[protein] + diphosphate. The catalysed reaction is L-threonyl-[protein] + ATP = 3-O-(5'-adenylyl)-L-threonyl-[protein] + diphosphate. It carries out the reaction 3-O-(5'-adenylyl)-L-threonyl-[protein] + H2O = L-threonyl-[protein] + AMP + H(+). The side chain of Glu-251 determines which of the two opposing activities (AMPylase or de-AMPylase) will take place. In response to endoplasmic reticulum stress, mediates de-AMPylase activity. Adenylyltransferase activity is inhibited by the inhibitory helix present at the N-terminus: Glu-251 binds ATP and competes with ATP-binding at Arg-391, thereby preventing adenylyltransferase activity. In unstressed cells, disengagement of Glu-251 promotes adenylyltransferase activity. Activation dissociates ATP-binding from Glu-251, allowing ordered binding of the entire ATP moiety with the alpha-phosphate in an orientation that is productive for accepting an incoming target hydroxyl side chain. Functionally, protein that can both mediate the addition of adenosine 5'-monophosphate (AMP) to specific residues of target proteins (AMPylation), and the removal of the same modification from target proteins (de-AMPylation), depending on the context. The side chain of Glu-251 determines which of the two opposing activities (AMPylase or de-AMPylase) will take place. Acts as a key regulator of the unfolded protein response (UPR) by mediating AMPylation or de-AMPylation of Hsc70-3/BiP. In unstressed cells, acts as an adenylyltransferase by mediating AMPylation of Hsc70-3/BiP at 'Thr-518', thereby inactivating it. In response to endoplasmic reticulum stress, acts as a phosphodiesterase by mediating removal of ATP (de-AMPylation) from Hsc70-3/BiP at 'Thr-518', leading to restore HSPA5/BiP activity. This chain is Protein adenylyltransferase Fic, found in Culex quinquefasciatus (Southern house mosquito).